Consider the following 354-residue polypeptide: Rhodopsin (354 aa).

The Extracellular portion of the chain corresponds to 1–36; it reads MNGTEGENFYIPMSNKTGVVRSPFDYPQYYLAEPWK. N-linked (GlcNAc...) asparagine glycosylation is found at Asn-2 and Asn-15. A helical membrane pass occupies residues 37–61; the sequence is FSVLAAYMFFLIIAGFPVNFLTLYV. The Cytoplasmic segment spans residues 62-73; sequence TIQHKKLRQPLN. A helical transmembrane segment spans residues 74–96; sequence YILLNLAVADLFMIFGGFPSTMI. Residues 97 to 110 lie on the Extracellular side of the membrane; that stretch reads TSMNGYFVFGPSGC. A disulfide bridge connects residues Cys-110 and Cys-187. Residues 111–133 traverse the membrane as a helical segment; sequence NFEGFFATLGGEIGLWSLVVLAI. Residues 134-136 carry the 'Ionic lock' involved in activated form stabilization motif; that stretch reads ERY. Residues 134–152 are Cytoplasmic-facing; the sequence is ERYVVVCKPMSNFRFGSQH. Residues 153-173 form a helical membrane-spanning segment; the sequence is AFMGVGLTWIMAMACAFPPLV. Residues 174–202 lie on the Extracellular side of the membrane; sequence GWSRYIPEGMQCSCGIDYYTLKPEVNNES. Asn-200 carries an N-linked (GlcNAc...) asparagine glycan. The helical transmembrane segment at 203–224 threads the bilayer; it reads FVIYMFVVHFSIPLTIIFFCYG. Topologically, residues 225–252 are cytoplasmic; it reads RLVCTVKEAAAQQQESETTQRAEREVTR. The chain crosses the membrane as a helical span at residues 253 to 274; sequence MVIIMVIAFLICWLPYASVAFF. The Extracellular segment spans residues 275–286; sequence IFCNQGSEFGPI. The helical transmembrane segment at 287–308 threads the bilayer; it reads FMTIPAFFAKAASLYNPLIYIL. Lys-296 bears the N6-(retinylidene)lysine mark. The Cytoplasmic portion of the chain corresponds to 309–354; the sequence is MNKQFRNCMITTICCGKNPFEEEESTSASASKTEASSVSSSQVAPA. 2 S-palmitoyl cysteine lipidation sites follow: Cys-322 and Cys-323. Residues 333–354 are disordered; that stretch reads STSASASKTEASSVSSSQVAPA. The segment covering 334–354 has biased composition (low complexity); that stretch reads TSASASKTEASSVSSSQVAPA.

Belongs to the G-protein coupled receptor 1 family. Opsin subfamily. Phosphorylated on some or all of the serine and threonine residues present in the C-terminal region. Post-translationally, contains one covalently linked retinal chromophore.

The protein resides in the membrane. Its subcellular location is the cell projection. The protein localises to the cilium. It is found in the photoreceptor outer segment. Its function is as follows. Photoreceptor required for image-forming vision at low light intensity. While most salt water fish species use retinal as chromophore, most freshwater fish use 3-dehydroretinal, or a mixture of retinal and 3-dehydroretinal. Light-induced isomerization of 11-cis to all-trans retinal triggers a conformational change that activates signaling via G-proteins. Subsequent receptor phosphorylation mediates displacement of the bound G-protein alpha subunit by arrestin and terminates signaling. In Scyliorhinus canicula (Small-spotted catshark), this protein is Rhodopsin (rho).